A 161-amino-acid polypeptide reads, in one-letter code: Small ribosomal subunit protein bS16 (161 aa).

Residues 114–161 (EGGPTTEATKPKKKSPAKKAKGGEGDADAAAEKVEASAEGEQTESAES) form a disordered region. Basic residues predominate over residues 124–133 (PKKKSPAKKA).

Belongs to the bacterial ribosomal protein bS16 family.

The sequence is that of Small ribosomal subunit protein bS16 from Mycobacterium marinum (strain ATCC BAA-535 / M).